A 400-amino-acid chain; its full sequence is Subtilisin-like protease 11 (400 aa).

Residues 1-19 form the signal peptide; that stretch reads MGLFTVVFTAIAALSAVDA. A propeptide spanning residues 20–117 is cleaved from the precursor; sequence AELLRSPNSK…VEHDRYVYID (98 aa). One can recognise an Inhibitor I9 domain in the interval 35-116; sequence SYLVVMKDSV…FVEHDRYVYI (82 aa). Residues 127 to 400 form the Peptidase S8 domain; it reads SWGLGRVSHR…NKLLYNGSGQ (274 aa). N-linked (GlcNAc...) asparagine glycosylation is present at Asn-138. Active-site charge relay system residues include Asp-159 and His-191. Residues Asn-252, Asn-336, and Asn-337 are each glycosylated (N-linked (GlcNAc...) asparagine). Ser-346 functions as the Charge relay system in the catalytic mechanism. N-linked (GlcNAc...) asparagine glycans are attached at residues Asn-388 and Asn-396.

The protein belongs to the peptidase S8 family.

The protein resides in the secreted. Its function is as follows. Secreted subtilisin-like serine protease with keratinolytic activity that contributes to pathogenicity. The sequence is that of Subtilisin-like protease 11 (SUB11) from Arthroderma gypseum (strain ATCC MYA-4604 / CBS 118893) (Microsporum gypseum).